We begin with the raw amino-acid sequence, 572 residues long: Proline--tRNA ligase (572 aa).

Belongs to the class-II aminoacyl-tRNA synthetase family. ProS type 1 subfamily. In terms of assembly, homodimer.

The protein resides in the cytoplasm. The catalysed reaction is tRNA(Pro) + L-proline + ATP = L-prolyl-tRNA(Pro) + AMP + diphosphate. In terms of biological role, catalyzes the attachment of proline to tRNA(Pro) in a two-step reaction: proline is first activated by ATP to form Pro-AMP and then transferred to the acceptor end of tRNA(Pro). As ProRS can inadvertently accommodate and process non-cognate amino acids such as alanine and cysteine, to avoid such errors it has two additional distinct editing activities against alanine. One activity is designated as 'pretransfer' editing and involves the tRNA(Pro)-independent hydrolysis of activated Ala-AMP. The other activity is designated 'posttransfer' editing and involves deacylation of mischarged Ala-tRNA(Pro). The misacylated Cys-tRNA(Pro) is not edited by ProRS. The polypeptide is Proline--tRNA ligase (Escherichia coli O139:H28 (strain E24377A / ETEC)).